The following is a 24-amino-acid chain: Cytochrome c oxidase subunit 7A2, mitochondrial (24 aa).

Basic and acidic residues predominate over residues 1-13; sequence FENKVPEKQKLFQ. A disordered region spans residues 1 to 24; that stretch reads FENKVPEKQKLFQEDNGIPVHLKG. Residue Lys-10 is modified to N6-acetyllysine.

The protein belongs to the cytochrome c oxidase VIIa family. In terms of assembly, component of the cytochrome c oxidase (complex IV, CIV), a multisubunit enzyme composed of 14 subunits. The complex is composed of a catalytic core of 3 subunits MT-CO1, MT-CO2 and MT-CO3, encoded in the mitochondrial DNA, and 11 supernumerary subunits COX4I, COX5A, COX5B, COX6A, COX6B, COX6C, COX7A, COX7B, COX7C, COX8 and NDUFA4, which are encoded in the nuclear genome. The complex exists as a monomer or a dimer and forms supercomplexes (SCs) in the inner mitochondrial membrane with NADH-ubiquinone oxidoreductase (complex I, CI) and ubiquinol-cytochrome c oxidoreductase (cytochrome b-c1 complex, complex III, CIII), resulting in different assemblies (supercomplex SCI(1)III(2)IV(1) and megacomplex MCI(2)III(2)IV(2)). Interacts with PET100.

The protein resides in the mitochondrion inner membrane. It functions in the pathway energy metabolism; oxidative phosphorylation. Its function is as follows. Component of the cytochrome c oxidase, the last enzyme in the mitochondrial electron transport chain which drives oxidative phosphorylation. The respiratory chain contains 3 multisubunit complexes succinate dehydrogenase (complex II, CII), ubiquinol-cytochrome c oxidoreductase (cytochrome b-c1 complex, complex III, CIII) and cytochrome c oxidase (complex IV, CIV), that cooperate to transfer electrons derived from NADH and succinate to molecular oxygen, creating an electrochemical gradient over the inner membrane that drives transmembrane transport and the ATP synthase. Cytochrome c oxidase is the component of the respiratory chain that catalyzes the reduction of oxygen to water. Electrons originating from reduced cytochrome c in the intermembrane space (IMS) are transferred via the dinuclear copper A center (CU(A)) of subunit 2 and heme A of subunit 1 to the active site in subunit 1, a binuclear center (BNC) formed by heme A3 and copper B (CU(B)). The BNC reduces molecular oxygen to 2 water molecules using 4 electrons from cytochrome c in the IMS and 4 protons from the mitochondrial matrix. This chain is Cytochrome c oxidase subunit 7A2, mitochondrial (COX7A2), found in Ovis aries (Sheep).